The chain runs to 93 residues: Secretoglobin family 3A member 2 (93 aa).

The signal sequence occupies residues 1–21; it reads MKLVTIFLLVTISLCSYSATA.

It belongs to the secretoglobin family. UGRP subfamily. Homodimer; disulfide-linked. Monomer. Interacts with APOA1. Highly expressed in lung and trachea. Detected throughout the airway epithelium in lung, with slightly higher expression in large airways. Found in lung submucosal gland acinus where it localizes to serous-like cells. Probably expressed in club cells of the bronchioles. Not detected in other tissues tested.

The protein localises to the secreted. Functionally, secreted cytokine-like protein. Binds to the scavenger receptor MARCO. Can also bind to pathogens including the Gram-positive bacterium L.monocytogenes, the Gram-negative bacterium P.aeruginosa, and yeast. Strongly inhibits phospholipase A2 (PLA2G1B) activity. Seems to have anti-inflammatory effects in respiratory epithelium. Also has anti-fibrotic activity in lung. May play a role in fetal lung development and maturation. Promotes branching morphogenesis during early stages of lung development. In the pituitary, may inhibit production of follicle-stimulating hormone (FSH) and luteinizing hormone (LH). This chain is Secretoglobin family 3A member 2 (SCGB3A2), found in Homo sapiens (Human).